A 229-amino-acid polypeptide reads, in one-letter code: C-&gt;U-editing enzyme APOBEC-1 (229 aa).

The region spanning 10 to 134 (VDPTLRRRIE…PRNRQGLRDL (125 aa)) is the CMP/dCMP-type deaminase domain. A Zn(2+)-binding site is contributed by histidine 61. Glutamate 63 serves as the catalytic Proton donor. 2 residues coordinate Zn(2+): cysteine 93 and cysteine 96.

It belongs to the cytidine and deoxycytidylate deaminase family. Homodimer. Interacts with A1CF; form an mRNA editing complex. Interacts with RBM47; form an mRNA editing complex. Found in a complex with CELF2/CUGBP2 and A1CF. Interacts with HNRPAB. Interacts with SYNCRIP. It depends on Zn(2+) as a cofactor. In terms of tissue distribution, expressed in the liver as well as small intestine.

It is found in the cytoplasm. Its subcellular location is the nucleus. The catalysed reaction is a cytidine in mRNA + H2O + H(+) = a uridine in mRNA + NH4(+). It carries out the reaction cytidine(6666) in apoB mRNA + H2O + H(+) = uridine(6666) in apoB mRNA + NH4(+). Functionally, cytidine deaminase catalyzing the cytidine to uridine postranscriptional editing of a variety of mRNAs. Form complexes with cofactors that confer differential editing activity and selectivity. Responsible for the postranscriptional editing of a CAA codon for Gln to a UAA codon for stop in the apolipoprotein B mRNA. Also involved in CGA (Arg) to UGA (Stop) editing in the NF1 mRNA. May also play a role in the epigenetic regulation of gene expression by participating in DNA demethylation. The sequence is that of C-&gt;U-editing enzyme APOBEC-1 from Rattus norvegicus (Rat).